A 127-amino-acid chain; its full sequence is Fluoride-specific ion channel FluC (127 aa).

4 helical membrane passes run 4–24, 35–55, 71–91, and 103–123; these read LLLA…LLSM, LGTL…FAWF, TGFC…VFLL, and VFVN…LFSA. Na(+)-binding residues include glycine 75 and threonine 78.

The protein belongs to the fluoride channel Fluc/FEX (TC 1.A.43) family.

The protein resides in the cell inner membrane. The enzyme catalyses fluoride(in) = fluoride(out). With respect to regulation, na(+) is not transported, but it plays an essential structural role and its presence is essential for fluoride channel function. Its function is as follows. Fluoride-specific ion channel. Important for reducing fluoride concentration in the cell, thus reducing its toxicity. This Escherichia coli (strain K12 / MC4100 / BW2952) protein is Fluoride-specific ion channel FluC.